The following is a 158-amino-acid chain: Large ribosomal subunit protein uL11 (158 aa).

It belongs to the universal ribosomal protein uL11 family. As to quaternary structure, part of the ribosomal stalk of the 50S ribosomal subunit. Interacts with L10 and the large rRNA to form the base of the stalk. L10 forms an elongated spine to which L12 dimers bind in a sequential fashion forming a multimeric L10(L12)X complex.

Functionally, forms part of the ribosomal stalk which helps the ribosome interact with GTP-bound translation factors. The chain is Large ribosomal subunit protein uL11 from Methanosphaerula palustris (strain ATCC BAA-1556 / DSM 19958 / E1-9c).